Here is a 40-residue protein sequence, read N- to C-terminus: Dolichyl-diphosphooligosaccharide--protein glycosyltransferase subunit 4 (40 aa).

The Lumenal segment spans residues 1–4 (MITD). The chain crosses the membrane as a helical span at residues 5-25 (VQLAIFSNVLGVFLFLLVVAY). Residues 26 to 40 (HYINANTGKSSPKAK) lie on the Cytoplasmic side of the membrane.

The protein belongs to the OST4 family. In terms of assembly, component of the oligosaccharyltransferase (OST) complex.

The protein localises to the endoplasmic reticulum membrane. Functionally, subunit of the oligosaccharyl transferase (OST) complex that catalyzes the initial transfer of a defined glycan (Glc(3)Man(9)GlcNAc(2) in eukaryotes) from the lipid carrier dolichol-pyrophosphate to an asparagine residue within an Asn-X-Ser/Thr consensus motif in nascent polypeptide chains, the first step in protein N-glycosylation. N-glycosylation occurs cotranslationally and the complex associates with the Sec61 complex at the channel-forming translocon complex that mediates protein translocation across the endoplasmic reticulum (ER). All subunits are required for a maximal enzyme activity. The sequence is that of Dolichyl-diphosphooligosaccharide--protein glycosyltransferase subunit 4 from Drosophila persimilis (Fruit fly).